Consider the following 61-residue polypeptide: Metallothionein-1 (61 aa).

At Met1 the chain carries N-acetylmethionine. The beta stretch occupies residues 1–29 (MDPNCSCSTGGSCTCSSSCGCKNCKCTSC). Residues Cys5, Cys7, Cys13, Cys15, Cys19, Cys21, Cys24, Cys26, Cys29, Cys33, Cys34, Cys36, Cys37, Cys41, Cys44, Cys48, Cys50, Cys57, Cys59, and Cys60 each contribute to the a divalent metal cation site. The segment at 30–61 (KKSCCSCCPVGCSKCAQGCVCKGASDKCTCCA) is alpha.

This sequence belongs to the metallothionein superfamily. Type 1 family.

In terms of biological role, metallothioneins have a high content of cysteine residues that bind various heavy metals; these proteins are transcriptionally regulated by both heavy metals and glucocorticoids. This chain is Metallothionein-1 (Mt1), found in Rattus norvegicus (Rat).